Here is a 494-residue protein sequence, read N- to C-terminus: Alpha-amylase A (494 aa).

The first 18 residues, 1–18, serve as a signal peptide directing secretion; the sequence is MFLAKSLVCLALLAVANA. Glutamine 19 carries the post-translational modification Pyrrolidone carboxylic acid. A disulfide bridge links cysteine 46 with cysteine 102. 3 residues coordinate Ca(2+): asparagine 116, arginine 165, and aspartate 174. A disulfide bridge connects residues cysteine 153 and cysteine 167. Chloride is bound at residue arginine 202. The Nucleophile role is filled by aspartate 204. Histidine 208 provides a ligand contact to Ca(2+). Glutamate 241 acts as the Proton donor in catalysis. Residues asparagine 304 and arginine 343 each coordinate chloride. Disulfide bonds link cysteine 376–cysteine 382 and cysteine 448–cysteine 460.

It belongs to the glycosyl hydrolase 13 family. In terms of assembly, monomer. Requires Ca(2+) as cofactor. It depends on chloride as a cofactor.

The catalysed reaction is Endohydrolysis of (1-&gt;4)-alpha-D-glucosidic linkages in polysaccharides containing three or more (1-&gt;4)-alpha-linked D-glucose units.. In Drosophila mauritiana (Fruit fly), this protein is Alpha-amylase A (Amy-d).